A 397-amino-acid polypeptide reads, in one-letter code: Tubby-like protein 8 (397 aa).

Over residues 1-16 (MAGSRKVNDLLEENKG) the composition is skewed to basic and acidic residues. Positions 1 to 46 (MAGSRKVNDLLEENKGNVDTITGSLSTQKGEDKENVSPEKVSTSVE) are disordered. Positions 17-28 (NVDTITGSLSTQ) are enriched in polar residues.

The protein belongs to the TUB family. As to expression, mostly expressed in roots, flowers and siliques.

The sequence is that of Tubby-like protein 8 from Arabidopsis thaliana (Mouse-ear cress).